The chain runs to 500 residues: Abscisic acid 8'-hydroxylase 3 (500 aa).

A helical transmembrane segment spans residues alanine 3–valine 23. Cysteine 426 is a binding site for heme.

It belongs to the cytochrome P450 family. It depends on heme as a cofactor.

Its subcellular location is the membrane. It catalyses the reaction 2-cis-(+)-abscisate + reduced [NADPH--hemoprotein reductase] + O2 = (+)-8'-hydroxyabscisate + oxidized [NADPH--hemoprotein reductase] + H2O + H(+). It functions in the pathway plant hormone degradation; abscisic acid degradation. In terms of biological role, involved in the oxidative degradation of abscisic acid. The polypeptide is Abscisic acid 8'-hydroxylase 3 (CYP707A7) (Oryza sativa subsp. japonica (Rice)).